The sequence spans 97 residues: Defective intron-associated endonuclease 3 (97 aa).

Functionally, this endonuclease is specific to the nrdB gene splice junction and is involved in intron homing. The polypeptide is Defective intron-associated endonuclease 3 (ITEVIIIR) (Escherichia coli (Bacteriophage T4)).